Consider the following 208-residue polypeptide: MMRPILIGITGGTGSGKSTVANEIYESFKDDCIAIIEQDSYYKDQSHLTFEDRIKTNYDHPNAFDTELLVEHLKELSKGNTINKPIYDFKEHTRKKEVVEVKAKDIIIVEGIMILQDVELRNLLDIKIYVDTDDDVRIIRRILRDIKERGRTIDSVVDQYLGVVKPMHSQFIEPTKKYADIIIPEGGQNKVAIDIMVSKIKQILSENK.

11–18 (GGTGSGKS) is a binding site for ATP.

Belongs to the uridine kinase family.

It is found in the cytoplasm. The enzyme catalyses uridine + ATP = UMP + ADP + H(+). The catalysed reaction is cytidine + ATP = CMP + ADP + H(+). The protein operates within pyrimidine metabolism; CTP biosynthesis via salvage pathway; CTP from cytidine: step 1/3. It functions in the pathway pyrimidine metabolism; UMP biosynthesis via salvage pathway; UMP from uridine: step 1/1. This Clostridium novyi (strain NT) protein is Uridine kinase.